The sequence spans 277 residues: Large ribosomal subunit protein uL2 (277 aa).

2 disordered regions span residues 37 to 60 and 223 to 265; these read KNST…GHKH and VVMN…KRTD. Positions 39 to 49 are enriched in polar residues; the sequence is STAGRNSNGHI. A compositionally biased stretch (basic residues) spans 50 to 60; sequence TTRHKGGGHKH. Basic and acidic residues predominate over residues 229–244; it reads DHPHGGGEGRTGEARE.

Belongs to the universal ribosomal protein uL2 family. Part of the 50S ribosomal subunit. Forms a bridge to the 30S subunit in the 70S ribosome.

One of the primary rRNA binding proteins. Required for association of the 30S and 50S subunits to form the 70S ribosome, for tRNA binding and peptide bond formation. It has been suggested to have peptidyltransferase activity; this is somewhat controversial. Makes several contacts with the 16S rRNA in the 70S ribosome. The chain is Large ribosomal subunit protein uL2 from Neisseria meningitidis serogroup C (strain 053442).